The primary structure comprises 268 residues: Sterol uptake protein 2 (268 aa).

This sequence belongs to the SUT1 family.

Its subcellular location is the nucleus. Putative transcription factor involved in the regulation of the activity of the cAMP/protein kinase A pathway. Involved in sterol uptake. With SUT1, positively regulates mating by repressing the expression of the mating inhibitors NCE102, PRR2 and RHO5 in response to pheromone. This is Sterol uptake protein 2 from Saccharomyces cerevisiae (strain ATCC 204508 / S288c) (Baker's yeast).